The sequence spans 441 residues: UDP-N-acetylglucosamine 1-carboxyvinyltransferase 1 (441 aa).

Position 42-43 (42-43 (KN)) interacts with phosphoenolpyruvate. R117 provides a ligand contact to UDP-N-acetyl-alpha-D-glucosamine. Catalysis depends on C141, which acts as the Proton donor. At C141 the chain carries 2-(S-cysteinyl)pyruvic acid O-phosphothioketal. UDP-N-acetyl-alpha-D-glucosamine-binding residues include D330 and I352.

Belongs to the EPSP synthase family. MurA subfamily.

The protein localises to the cytoplasm. The catalysed reaction is phosphoenolpyruvate + UDP-N-acetyl-alpha-D-glucosamine = UDP-N-acetyl-3-O-(1-carboxyvinyl)-alpha-D-glucosamine + phosphate. Its pathway is cell wall biogenesis; peptidoglycan biosynthesis. Its function is as follows. Cell wall formation. Adds enolpyruvyl to UDP-N-acetylglucosamine. The protein is UDP-N-acetylglucosamine 1-carboxyvinyltransferase 1 of Symbiobacterium thermophilum (strain DSM 24528 / JCM 14929 / IAM 14863 / T).